We begin with the raw amino-acid sequence, 182 residues long: Caltractin ICL1b (182 aa).

Residues 1 to 31 form a disordered region; the sequence is MSRRGQQPPPQQQQAPPQKNQAGKFNPAEFV. EF-hand domains lie at 38–73, 74–109, 111–146, and 147–182; these read EEVL…LGFE, AKNQ…RISE, DSKA…LGET, and MDDS…KTFA. 10 residues coordinate Ca(2+): aspartate 51, aspartate 53, threonine 55, serine 57, glutamate 62, aspartate 87, aspartate 89, serine 91, glutamine 93, and glutamate 98.

It belongs to the centrin family.

The protein resides in the cytoplasm. Its subcellular location is the cytoskeleton. Plays a fundamental role in microtubule organizing center structure and function. Component of the infraciliary lattice (ICL) and the ciliary basal bodies. This Paramecium tetraurelia protein is Caltractin ICL1b (Icl1b).